The primary structure comprises 372 residues: 4-hydroxy-3-methylbut-2-en-1-yl diphosphate synthase (flavodoxin) (372 aa).

Positions 270, 273, 305, and 312 each coordinate [4Fe-4S] cluster.

It belongs to the IspG family. The cofactor is [4Fe-4S] cluster.

The catalysed reaction is (2E)-4-hydroxy-3-methylbut-2-enyl diphosphate + oxidized [flavodoxin] + H2O + 2 H(+) = 2-C-methyl-D-erythritol 2,4-cyclic diphosphate + reduced [flavodoxin]. Its pathway is isoprenoid biosynthesis; isopentenyl diphosphate biosynthesis via DXP pathway; isopentenyl diphosphate from 1-deoxy-D-xylulose 5-phosphate: step 5/6. Converts 2C-methyl-D-erythritol 2,4-cyclodiphosphate (ME-2,4cPP) into 1-hydroxy-2-methyl-2-(E)-butenyl 4-diphosphate. The chain is 4-hydroxy-3-methylbut-2-en-1-yl diphosphate synthase (flavodoxin) from Salmonella typhi.